The primary structure comprises 65 residues: Large ribosomal subunit protein bL35 (65 aa).

Belongs to the bacterial ribosomal protein bL35 family.

This Prochlorococcus marinus (strain MIT 9301) protein is Large ribosomal subunit protein bL35.